The following is a 423-amino-acid chain: Imidazolonepropionase (423 aa).

Residues histidine 87 and histidine 89 each contribute to the Fe(3+) site. Zn(2+)-binding residues include histidine 87 and histidine 89. 4-imidazolone-5-propanoate is bound by residues arginine 96, tyrosine 159, and histidine 192. Tyrosine 159 is a binding site for N-formimidoyl-L-glutamate. Histidine 257 contributes to the Fe(3+) binding site. Histidine 257 serves as a coordination point for Zn(2+). Residue glutamate 260 coordinates 4-imidazolone-5-propanoate. Aspartate 331 is a binding site for Fe(3+). Aspartate 331 contacts Zn(2+). N-formimidoyl-L-glutamate-binding residues include asparagine 333 and glycine 335. Residue serine 336 coordinates 4-imidazolone-5-propanoate.

This sequence belongs to the metallo-dependent hydrolases superfamily. HutI family. Requires Zn(2+) as cofactor. Fe(3+) serves as cofactor.

The protein localises to the cytoplasm. It carries out the reaction 4-imidazolone-5-propanoate + H2O = N-formimidoyl-L-glutamate. The protein operates within amino-acid degradation; L-histidine degradation into L-glutamate; N-formimidoyl-L-glutamate from L-histidine: step 3/3. Functionally, catalyzes the hydrolytic cleavage of the carbon-nitrogen bond in imidazolone-5-propanoate to yield N-formimidoyl-L-glutamate. It is the third step in the universal histidine degradation pathway. The chain is Imidazolonepropionase from Porphyromonas gingivalis (strain ATCC 33277 / DSM 20709 / CIP 103683 / JCM 12257 / NCTC 11834 / 2561).